A 566-amino-acid chain; its full sequence is Class II hydrophobin FOXG_02748 (566 aa).

A signal peptide spans M1–A22. Intrachain disulfides connect C497/C546, C507/C537, C508/C520, and C547/C558.

The protein belongs to the cerato-ulmin hydrophobin family. Homodimer. Homodimers further self-assemble to form highly ordered films at water-air interfaces through intermolecular interactions.

Its subcellular location is the secreted. It localises to the cell wall. Aerial growth, conidiation, and dispersal of filamentous fungi in the environment rely upon a capability of their secreting small amphipathic proteins called hydrophobins (HPBs) with low sequence identity. Class I can self-assemble into an outermost layer of rodlet bundles on aerial cell surfaces, conferring cellular hydrophobicity that supports fungal growth, development and dispersal; whereas Class II form highly ordered films at water-air interfaces through intermolecular interactions but contribute nothing to the rodlet structure. FOXG_02748 is a class II hydrophobin that is likely required for plant colonization. In Fusarium oxysporum f. sp. lycopersici (strain 4287 / CBS 123668 / FGSC 9935 / NRRL 34936) (Fusarium vascular wilt of tomato), this protein is Class II hydrophobin FOXG_02748.